Reading from the N-terminus, the 863-residue chain is DNA replication licensing factor mcm4-B (863 aa).

Residues 1–130 form a disordered region; the sequence is MSSPTSTPSR…ARKVKQVDLH (130 aa). 2 stretches are compositionally biased toward polar residues: residues 54 to 64 and 84 to 99; these read SPSGDVQSPSG and LDLS…SSRV. Residues 306–331 form a C4-type zinc finger; it reads CQVCAFTTRVEIDRGRIAEPSVCKHC. Positions 458 to 667 constitute an MCM domain; sequence IYERLAAALA…YDRRLAHHLV (210 aa). The ATP site is built by Y471, R497, K516, S517, N618, R643, R732, and E735. The short motif at 642-645 is the Arginine finger element; the sequence is SRFD.

This sequence belongs to the MCM family. In terms of assembly, component of the mcm2-7 complex (RLF-M). The complex forms a toroidal hexameric ring with the proposed subunit order mcm2-mcm6-mcm4-mcm7-mcm3-mcm5. The heterodimer of mmcm3/mcm5 interacts with mcm4, mmcm6, mcm7 and weakly with mcm2. Begins to associate with zmcm6 at the neurula stage. Component of the CMG helicase complex, composed of the mcm2-7 complex, the GINS complex and cdc45. In terms of processing, hyperphosphorylated during mitosis in a mechanism requiring cdc2-cyclin B and other kinases. Undergoes dephosphorylation after exiting mitosis, existing in a partially phosphorylated state in the cytosolic interphase mcm complex which associates with the pre-replication complexes (pre-Rcs). Complete dephosphorylation inactivates the mcm complex, preventing its binding to chromatin. Becomes actively phosphorylated during S phase once the mcm complex is assembled on the chromatin. This chromatin-associated phosphorylation occurs during the activation of the pre-Rcs and is independent of cdks. Phosphorylated by the cdc7-dbf4b complex.

Its subcellular location is the nucleus. It is found in the chromosome. The enzyme catalyses ATP + H2O = ADP + phosphate + H(+). Its function is as follows. Acts as a component of the MCM2-7 complex (MCM complex) which is the replicative helicase essential for 'once per cell cycle' DNA replication initiation and elongation in eukaryotic cells. Core component of CDC45-MCM-GINS (CMG) helicase, the molecular machine that unwinds template DNA during replication, and around which the replisome is built. The active ATPase sites in the MCM2-7 ring are formed through the interaction surfaces of two neighboring subunits such that a critical structure of a conserved arginine finger motif is provided in trans relative to the ATP-binding site of the Walker A box of the adjacent subunit. The six ATPase active sites, however, are likely to contribute differentially to the complex helicase activity. This Xenopus laevis (African clawed frog) protein is DNA replication licensing factor mcm4-B (mcm4-b).